Here is a 159-residue protein sequence, read N- to C-terminus: Peptide methionine sulfoxide reductase MsrB (159 aa).

Residues 22–144 (RERLEANLTA…NSVSLQFVKA (123 aa)) enclose the MsrB domain. Residues cysteine 61, cysteine 64, cysteine 110, and cysteine 113 each contribute to the Zn(2+) site. Cysteine 133 acts as the Nucleophile in catalysis.

The protein belongs to the MsrB Met sulfoxide reductase family. Zn(2+) serves as cofactor.

It carries out the reaction L-methionyl-[protein] + [thioredoxin]-disulfide + H2O = L-methionyl-(R)-S-oxide-[protein] + [thioredoxin]-dithiol. This is Peptide methionine sulfoxide reductase MsrB from Caulobacter vibrioides (strain ATCC 19089 / CIP 103742 / CB 15) (Caulobacter crescentus).